The chain runs to 183 residues: GTP cyclohydrolase 1 (183 aa).

3 residues coordinate Zn(2+): cysteine 71, histidine 74, and cysteine 142.

Belongs to the GTP cyclohydrolase I family. Toroid-shaped homodecamer, composed of two pentamers of five dimers.

The catalysed reaction is GTP + H2O = 7,8-dihydroneopterin 3'-triphosphate + formate + H(+). It participates in cofactor biosynthesis; 7,8-dihydroneopterin triphosphate biosynthesis; 7,8-dihydroneopterin triphosphate from GTP: step 1/1. The chain is GTP cyclohydrolase 1 from Leptospira borgpetersenii serovar Hardjo-bovis (strain JB197).